The following is a 221-amino-acid chain: MSSSQKKAGGKAGKPTKRSQNYAALRKARLPKPPALKVPVAKPTNTILPQTGCVWQSLGTPLSLSSFNGLGVRFLYSFLKDFAGPRILEEDLIYRMVFSITPSHAGTFCLTDDVTTEDGRAVAHGNPMQEFPHGAFHANEKFGFELVFTAPTHAGMQNQNFKHSYAVALCLDFDAQPEGSKNPSYRFNEVWVERKAFPRAGPLRSLITVGLLDEADDLDRH.

Residues 1 to 24 form a disordered region; that stretch reads MSSSQKKAGGKAGKPTKRSQNYAA. Residue S2 is modified to N-acetylserine; by host.

This sequence belongs to the alphamovirus/ilarvirus capsid protein family.

Its subcellular location is the virion. Capsid protein. Binds to the to the 3' end of the nonpolyadenylated viral RNA and is involved in viral RNA translation initiation. Probably binds RNA and plays a role in packaging. The chain is Capsid protein from Alfalfa mosaic virus (strain YSMV).